Here is a 395-residue protein sequence, read N- to C-terminus: S-adenosylmethionine synthase (395 aa).

His-16 is a binding site for ATP. Asp-18 is a Mg(2+) binding site. Glu-44 is a binding site for K(+). L-methionine-binding residues include Glu-57 and Gln-100. Positions 100 to 110 (QSPDIAQGVDR) are flexible loop. Residues 167-169 (DAK), 233-234 (RF), Asp-242, 248-249 (RK), Ala-265, and Lys-269 contribute to the ATP site. Asp-242 lines the L-methionine pocket. An L-methionine-binding site is contributed by Lys-273.

The protein belongs to the AdoMet synthase family. In terms of assembly, homotetramer; dimer of dimers. The cofactor is Mg(2+). K(+) serves as cofactor.

The protein resides in the cytoplasm. The enzyme catalyses L-methionine + ATP + H2O = S-adenosyl-L-methionine + phosphate + diphosphate. It participates in amino-acid biosynthesis; S-adenosyl-L-methionine biosynthesis; S-adenosyl-L-methionine from L-methionine: step 1/1. Catalyzes the formation of S-adenosylmethionine (AdoMet) from methionine and ATP. The overall synthetic reaction is composed of two sequential steps, AdoMet formation and the subsequent tripolyphosphate hydrolysis which occurs prior to release of AdoMet from the enzyme. This is S-adenosylmethionine synthase from Burkholderia thailandensis (strain ATCC 700388 / DSM 13276 / CCUG 48851 / CIP 106301 / E264).